Reading from the N-terminus, the 243-residue chain is Homeobox protein goosecoid isoform B (243 aa).

The homeobox DNA-binding region spans 148-207 (KRRHRTIFTDEQLEALENLFQETKYPDVGTREQLARRVHLREEKVEVWFKNRRAKWRRQK). Residues 201-243 (AKWRRQKRSSSEESENAQKWNKSSKNSAEKRDEQAKSDLDSDS) form a disordered region. Positions 217-226 (AQKWNKSSKN) are enriched in polar residues. Over residues 227–243 (SAEKRDEQAKSDLDSDS) the composition is skewed to basic and acidic residues.

Belongs to the paired homeobox family. Bicoid subfamily.

The protein resides in the nucleus. Plays a central role in executing Spemann's organizer phenomenon (the dorsal blastopore lip of the early Xenopus laevis gastrula can organize a complete secondary body axis when transplanted to another embryo). The chain is Homeobox protein goosecoid isoform B (gsc-b) from Xenopus laevis (African clawed frog).